Here is a 167-residue protein sequence, read N- to C-terminus: Ureidoglycolate lyase (167 aa).

Belongs to the ureidoglycolate lyase family. Homodimer. Ni(2+) serves as cofactor.

The catalysed reaction is (S)-ureidoglycolate = urea + glyoxylate. It participates in nitrogen metabolism; (S)-allantoin degradation. In terms of biological role, catalyzes the catabolism of the allantoin degradation intermediate (S)-ureidoglycolate, generating urea and glyoxylate. Involved in the utilization of allantoin as nitrogen source. The sequence is that of Ureidoglycolate lyase from Pseudomonas putida (strain ATCC 700007 / DSM 6899 / JCM 31910 / BCRC 17059 / LMG 24140 / F1).